The sequence spans 225 residues: Glutathione S-transferase Mu 3 (225 aa).

A GST N-terminal domain is found at Ser-5–Gly-92. Residues Tyr-11–Trp-12, Trp-50–Lys-54, and Asn-63–Leu-64 contribute to the glutathione site. Residue Lys-54 forms a Glycyl lysine isopeptide (Lys-Gly) (interchain with G-Cter in SUMO2) linkage. Lys-73 participates in a covalent cross-link: Glycyl lysine isopeptide (Lys-Gly) (interchain with G-Cter in SUMO2). Residue Gln-76–Ser-77 participates in glutathione binding. The region spanning Thr-94 to Ile-212 is the GST C-terminal domain. A substrate-binding site is contributed by Tyr-120.

Belongs to the GST superfamily. Mu family. As to quaternary structure, homodimer.

It localises to the cytoplasm. The enzyme catalyses RX + glutathione = an S-substituted glutathione + a halide anion + H(+). Functionally, conjugation of reduced glutathione to a wide number of exogenous and endogenous hydrophobic electrophiles. May govern uptake and detoxification of both endogenous compounds and xenobiotics at the testis and brain blood barriers. The protein is Glutathione S-transferase Mu 3 (GSTM3) of Macaca fuscata fuscata (Japanese macaque).